A 138-amino-acid polypeptide reads, in one-letter code: Venom allergen 2 (138 aa).

The N-terminal stretch at 1-19 is a signal peptide; that stretch reads MKSFVLATCLLGFAQIIYA.

This sequence belongs to the ant venom allergen 2/4 family. In terms of assembly, homodimer; disulfide-linked. In terms of tissue distribution, expressed by the venom gland.

The protein localises to the secreted. The polypeptide is Venom allergen 2 (Solenopsis saevissima (Fire ant)).